The chain runs to 83 residues: uncharacterized protein (83 aa).

Positions 1-20 (MRRALTLAVLATCAVLPALA) are cleaved as a signal peptide.

The protein to P.denitrificans and M.extorquens MoxJ.

This is an uncharacterized protein from Paracoccus denitrificans.